The sequence spans 321 residues: Glucokinase (321 aa).

8–13 (GDVGGT) is an ATP binding site.

It belongs to the bacterial glucokinase family.

The protein resides in the cytoplasm. The enzyme catalyses D-glucose + ATP = D-glucose 6-phosphate + ADP + H(+). The chain is Glucokinase from Psychromonas ingrahamii (strain DSM 17664 / CCUG 51855 / 37).